A 622-amino-acid polypeptide reads, in one-letter code: Low affinity potassium transport system protein Kup (622 aa).

Transmembrane regions (helical) follow at residues 9 to 29, 49 to 69, 103 to 123, 137 to 157, 165 to 185, 213 to 233, 247 to 267, 276 to 296, 337 to 357, 363 to 383, 396 to 416, and 419 to 439; these read LPAI…TSPL, VFGF…IKYL, VIMG…TPAI, PQLD…LFMI, VGKL…GLGL, VSFI…ALYA, WFTV…ALLL, PFFL…AALA, IYIP…IVSF, LAAA…ILST, FVAL…TANL, and LLSG…VMTT.

It belongs to the HAK/KUP transporter (TC 2.A.72) family.

Its subcellular location is the cell inner membrane. It carries out the reaction K(+)(in) + H(+)(in) = K(+)(out) + H(+)(out). Functionally, responsible for the low-affinity transport of potassium into the cell. Likely operates as a K(+):H(+) symporter. The sequence is that of Low affinity potassium transport system protein Kup from Shigella flexneri serotype 5b (strain 8401).